A 106-amino-acid chain; its full sequence is MILTTADTLGKREIIEYKGLVTGIIVRTPTITQGILGGLKNIIGGKNTSYTNVCKEARLHAEQEMINQAQELGANAIVAIRYDSSSLGGTTSGTEVFCYGTAVVIR.

The protein belongs to the UPF0145 family.

This Francisella philomiragia subsp. philomiragia (strain ATCC 25017 / CCUG 19701 / FSC 153 / O#319-036) protein is UPF0145 protein Fphi_1781.